The following is a 121-amino-acid chain: Small ribosomal subunit protein uS13 (121 aa).

Positions 91–121 (HRRGLPVRGQNSKNNARTRKGPRRTVANKKK) are disordered. The span at 106–121 (ARTRKGPRRTVANKKK) shows a compositional bias: basic residues.

The protein belongs to the universal ribosomal protein uS13 family. Part of the 30S ribosomal subunit. Forms a loose heterodimer with protein S19. Forms two bridges to the 50S subunit in the 70S ribosome.

Functionally, located at the top of the head of the 30S subunit, it contacts several helices of the 16S rRNA. In the 70S ribosome it contacts the 23S rRNA (bridge B1a) and protein L5 of the 50S subunit (bridge B1b), connecting the 2 subunits; these bridges are implicated in subunit movement. Contacts the tRNAs in the A and P-sites. The protein is Small ribosomal subunit protein uS13 of Bacillus mycoides (strain KBAB4) (Bacillus weihenstephanensis).